A 315-amino-acid polypeptide reads, in one-letter code: Cobalamin biosynthesis protein CobD (315 aa).

A run of 7 helical transmembrane segments spans residues 1–21, 50–70, 79–99, 151–171, 209–229, 250–270, and 291–311; these read MLDIIIAVIIDWIIGDPYWFP, VFGGFIVIIVSSISFLIPFII, VIYHVINIFFLWTVLAAKSLH, DGIIAPLLFAMLGGAPLAMMY, VTGIIMCLVSPIIGGNIFYSI, AAAAASGIMLGGTNIYFGEVV, and IILMYSSEILFIIIYVIIICF.

Belongs to the CobD/CbiB family.

It localises to the cell membrane. The protein operates within cofactor biosynthesis; adenosylcobalamin biosynthesis. Converts cobyric acid to cobinamide by the addition of aminopropanol on the F carboxylic group. This chain is Cobalamin biosynthesis protein CobD, found in Clostridium acetobutylicum (strain ATCC 824 / DSM 792 / JCM 1419 / IAM 19013 / LMG 5710 / NBRC 13948 / NRRL B-527 / VKM B-1787 / 2291 / W).